A 209-amino-acid chain; its full sequence is Potassium-transporting ATPase KdpC subunit (209 aa).

The helical transmembrane segment at 18 to 38 (MLAVFTLFGLGLAYSLVATGI) threads the bilayer.

Belongs to the KdpC family. As to quaternary structure, the system is composed of three essential subunits: KdpA, KdpB and KdpC.

The protein resides in the cell inner membrane. Its function is as follows. Part of the high-affinity ATP-driven potassium transport (or Kdp) system, which catalyzes the hydrolysis of ATP coupled with the electrogenic transport of potassium into the cytoplasm. This subunit acts as a catalytic chaperone that increases the ATP-binding affinity of the ATP-hydrolyzing subunit KdpB by the formation of a transient KdpB/KdpC/ATP ternary complex. The sequence is that of Potassium-transporting ATPase KdpC subunit from Xanthomonas oryzae pv. oryzae (strain MAFF 311018).